The following is a 227-amino-acid chain: Enolase-phosphatase E1 (227 aa).

It belongs to the HAD-like hydrolase superfamily. MasA/MtnC family. In terms of assembly, monomer. The cofactor is Mg(2+).

The catalysed reaction is 5-methylsulfanyl-2,3-dioxopentyl phosphate + H2O = 1,2-dihydroxy-5-(methylsulfanyl)pent-1-en-3-one + phosphate. The protein operates within amino-acid biosynthesis; L-methionine biosynthesis via salvage pathway; L-methionine from S-methyl-5-thio-alpha-D-ribose 1-phosphate: step 3/6. It participates in amino-acid biosynthesis; L-methionine biosynthesis via salvage pathway; L-methionine from S-methyl-5-thio-alpha-D-ribose 1-phosphate: step 4/6. Bifunctional enzyme that catalyzes the enolization of 2,3-diketo-5-methylthiopentyl-1-phosphate (DK-MTP-1-P) into the intermediate 2-hydroxy-3-keto-5-methylthiopentenyl-1-phosphate (HK-MTPenyl-1-P), which is then dephosphorylated to form the acireductone 1,2-dihydroxy-3-keto-5-methylthiopentene (DHK-MTPene). In Pseudomonas syringae pv. tomato (strain ATCC BAA-871 / DC3000), this protein is Enolase-phosphatase E1.